A 271-amino-acid chain; its full sequence is tRNA pseudouridine synthase A (271 aa).

The Nucleophile role is filled by D56. Substrate is bound at residue Y120.

The protein belongs to the tRNA pseudouridine synthase TruA family. Homodimer.

It carries out the reaction uridine(38/39/40) in tRNA = pseudouridine(38/39/40) in tRNA. Functionally, formation of pseudouridine at positions 38, 39 and 40 in the anticodon stem and loop of transfer RNAs. This is tRNA pseudouridine synthase A from Janthinobacterium sp. (strain Marseille) (Minibacterium massiliensis).